The chain runs to 557 residues: Inositol-3-phosphate synthase 1 (557 aa).

NAD(+) contacts are provided by Gly67, Gly68, Asn69, Asn70, Asp141, Ser177, Val178, Gln188, Arg191, Thr228, Ala229, Asn230, Thr231, Gly278, Ser279, Asp303, Ser306, Asn337, Asn338, Asp339, and Lys352. Position 279 is a phosphoserine (Ser279). At Ser357 the chain carries Phosphoserine. NAD(+) is bound by residues Gly390, Asp391, Asp419, and Ser420. The disordered stretch occupies residues Gly514 to Ala557. Ser524 is subject to Phosphoserine. Residues Thr533 to Ala557 are compositionally biased toward polar residues.

Belongs to the myo-inositol 1-phosphate synthase family. As to quaternary structure, homotrimer. NAD(+) serves as cofactor. Post-translationally, phosphorylation at Ser-524 does not appear to affect enzyme activity, and is detected in brain and testis. In terms of tissue distribution, expressed in testis, brain and epididymis (at protein level). Moderately expressed in brain, lung, liver, and kidney. Low expression in heart and spleen. Very low expression in skeletal muscle. As to expression, expressed in testis, spleen, heart, brainstem, hippocampus, cerebellum, cortex and amygdala. Absent or very lowly expressed in intestine, lung and muscle. Expressed in intestine, lung, liver, muscle, testis, spleen, brainstem, hippocampus, cerebellum, cortex and amygdala. Absent or lowly expressed in heart and kidney. In terms of tissue distribution, expressed in intestine (at protein level).

The protein resides in the cytoplasm. It catalyses the reaction D-glucose 6-phosphate = 1D-myo-inositol 3-phosphate. It participates in polyol metabolism; myo-inositol biosynthesis; myo-inositol from D-glucose 6-phosphate: step 1/2. With respect to regulation, inhibited by 2-deoxyglucitol 6-phosphate (dgtolP) and 2-deoxy-D-glucose 6-phosphate. Inhibited by copper, mercury, cadmium, zinc and copper ions. Activated by potassium and ammonium ions. In terms of biological role, key enzyme in myo-inositol biosynthesis pathway that catalyzes the conversion of glucose 6-phosphate to 1-myo-inositol 1-phosphate in a NAD-dependent manner. Rate-limiting enzyme in the synthesis of all inositol-containing compounds. Its function is as follows. Key enzyme in myo-inositol biosynthesis pathway that catalyzes the conversion of glucose 6-phosphate to 1-myo-inositol 1-phosphate in a NAD-dependent manner. Functionally, competitively inhibits the function of isoform 1, presumably by competing for NAD cofactor. This Rattus norvegicus (Rat) protein is Inositol-3-phosphate synthase 1 (Isyna1).